The chain runs to 256 residues: Protein crossbronx-like (256 aa).

Residues 17-179 form the UBC core domain; sequence NQGYKVLAEY…AKVSILWSCQ (163 aa).

The protein belongs to the ubiquitin-conjugating enzyme family. FTS subfamily.

In Drosophila virilis (Fruit fly), this protein is Protein crossbronx-like.